A 271-amino-acid polypeptide reads, in one-letter code: uncharacterized protein (271 aa).

The signal sequence occupies residues 1–18 (MKGFFLIAGFLLFARALC). At 19 to 187 (ASWNVEEGTL…FSPPPKRANY (169 aa)) the chain is on the lumenal side. A helical membrane pass occupies residues 188 to 208 (FLSICFSVSVVVSLIGLLGVW). The Cytoplasmic segment spans residues 209–230 (QKLLPKSNVYSVSSSSFARTFG). A helical membrane pass occupies residues 231 to 251 (FASLAVAEILLFIYWTSLSIF). At 252-271 (QFGAYAAGVAIMCGIAAKSL) the chain is on the lumenal side.

The protein localises to the endoplasmic reticulum membrane. This is an uncharacterized protein from Schizosaccharomyces pombe (strain 972 / ATCC 24843) (Fission yeast).